Here is a 434-residue protein sequence, read N- to C-terminus: UDP-N-acetylglucosamine 1-carboxyvinyltransferase (434 aa).

22-23 (KN) contacts phosphoenolpyruvate. Arg97 lines the UDP-N-acetyl-alpha-D-glucosamine pocket. The active-site Proton donor is Asp121. Residues Asp319 and Met341 each contribute to the UDP-N-acetyl-alpha-D-glucosamine site.

It belongs to the EPSP synthase family. MurA subfamily.

It localises to the cytoplasm. It catalyses the reaction phosphoenolpyruvate + UDP-N-acetyl-alpha-D-glucosamine = UDP-N-acetyl-3-O-(1-carboxyvinyl)-alpha-D-glucosamine + phosphate. The protein operates within cell wall biogenesis; peptidoglycan biosynthesis. Functionally, cell wall formation. Adds enolpyruvyl to UDP-N-acetylglucosamine. This is UDP-N-acetylglucosamine 1-carboxyvinyltransferase from Bacteroides fragilis (strain ATCC 25285 / DSM 2151 / CCUG 4856 / JCM 11019 / LMG 10263 / NCTC 9343 / Onslow / VPI 2553 / EN-2).